The sequence spans 203 residues: Small ribosomal subunit protein uS4c (203 aa).

One can recognise an S4 RNA-binding domain in the interval 92-150; sequence MRLDNIIYRLGMAPTIANARQLVNHGHIVVNDRIVTIPSYRCKPKDIISVRNNSTSRNV.

Belongs to the universal ribosomal protein uS4 family. As to quaternary structure, part of the 30S ribosomal subunit. Contacts protein S5. The interaction surface between S4 and S5 is involved in control of translational fidelity.

The protein localises to the plastid. Its subcellular location is the chloroplast. One of the primary rRNA binding proteins, it binds directly to 16S rRNA where it nucleates assembly of the body of the 30S subunit. Its function is as follows. With S5 and S12 plays an important role in translational accuracy. This is Small ribosomal subunit protein uS4c (rps4) from Chlorokybus atmophyticus (Soil alga).